Here is an 81-residue protein sequence, read N- to C-terminus: EDLPHVDAATNPIAQSLHYIEDANASERNPVTKTELPGSEQFCHNCSFIQADSGAWRPCTLYPGYTVSEDGWCLSWAHKTA.

Residues Cys43, Cys46, Cys59, and Cys73 each coordinate [4Fe-4S] cluster.

Belongs to the high-potential iron-sulfur protein (HiPIP) family. In terms of assembly, homodimer.

In terms of biological role, specific class of high-redox-potential 4Fe-4S ferredoxins. Functions in anaerobic electron transport in most purple and in some other photosynthetic bacteria and in at least one genus (Paracoccus) of halophilic, denitrifying bacteria. The sequence is that of High-potential iron-sulfur protein (hip) from Thiococcus pfennigii (Thiocapsa pfennigii).